Reading from the N-terminus, the 102-residue chain is PqqA binding protein (102 aa).

Belongs to the PqqD family. Monomer. Interacts with PqqE.

Its pathway is cofactor biosynthesis; pyrroloquinoline quinone biosynthesis. In terms of biological role, functions as a PqqA binding protein and presents PqqA to PqqE, in the pyrroloquinoline quinone (PQQ) biosynthetic pathway. This is PqqA binding protein from Rhodopseudomonas palustris (strain TIE-1).